We begin with the raw amino-acid sequence, 244 residues long: Putative nucleosome assembly protein C36B7.08c (244 aa).

Residues 199–244 (EAMTEEASDEDESVDLEEDEEEEDEEDEEGDEEKQEPPSKKSKKSN) form a disordered region. The segment covering 201–232 (MTEEASDEDESVDLEEDEEEEDEEDEEGDEEK) has biased composition (acidic residues). Ser-211 carries the post-translational modification Phosphoserine.

Belongs to the nucleosome assembly protein (NAP) family.

Its subcellular location is the nucleus. The chain is Putative nucleosome assembly protein C36B7.08c from Schizosaccharomyces pombe (strain 972 / ATCC 24843) (Fission yeast).